The primary structure comprises 252 residues: Protein Flattop homolog (252 aa).

Residues 177 to 252 (TEKRRRKRTI…EKERKAAKGH (76 aa)) are disordered. The segment covering 218–252 (PKDKPKDKPKDKEAGKKDKTKDKGKEKERKAAKGH) has biased composition (basic and acidic residues).

This sequence belongs to the Flattop family.

The protein is Protein Flattop homolog of Drosophila melanogaster (Fruit fly).